A 274-amino-acid polypeptide reads, in one-letter code: Probable S-adenosylmethionine-dependent methyltransferase MT3114 (274 aa).

The tract at residues 1–24 (MCAFVPHVPRHSRGDNPPSASTAS) is disordered.

The protein belongs to the methyltransferase superfamily.

In terms of biological role, probable S-adenosylmethionine-dependent methyltransferase required for the 6-O-methylation of the polysaccharide backbone of 6-O-methylglucosyl lipopolysaccharides (MGLP). The sequence is that of Probable S-adenosylmethionine-dependent methyltransferase MT3114 from Mycobacterium tuberculosis (strain CDC 1551 / Oshkosh).